We begin with the raw amino-acid sequence, 201 residues long: Prostamide/prostaglandin F synthase (201 aa).

The protein belongs to the peroxiredoxin-like PRXL2 family. Prostamide/prostaglandin F synthase subfamily.

Its subcellular location is the cytoplasm. It localises to the cytosol. The catalysed reaction is prostaglandin H2 + [thioredoxin]-dithiol = prostaglandin F2alpha + [thioredoxin]-disulfide. It catalyses the reaction prostamide F2alpha + [thioredoxin]-disulfide = prostamide H2 + [thioredoxin]-dithiol. Catalyzes the reduction of prostaglandin-ethanolamide H(2) (prostamide H(2)) to prostamide F(2alpha) with NADPH as proton donor. Also able to reduce prostaglandin H(2) to prostaglandin F(2alpha). The chain is Prostamide/prostaglandin F synthase (prxl2b) from Xenopus tropicalis (Western clawed frog).